We begin with the raw amino-acid sequence, 397 residues long: Elongation factor Tu (397 aa).

Residues 10 to 207 (KPHVNIGTIG…VLDEYVKEPV (198 aa)) form the tr-type G domain. Residues 19–26 (GHIDHGKT) are G1. Position 19–26 (19–26 (GHIDHGKT)) interacts with GTP. Thr-26 contacts Mg(2+). Residues 60–64 (GITIS) form a G2 region. Positions 81–84 (DCPG) are G3. GTP contacts are provided by residues 81–85 (DCPGH) and 136–139 (NKCD). The G4 stretch occupies residues 136-139 (NKCD). The segment at 174–176 (SAL) is G5.

It belongs to the TRAFAC class translation factor GTPase superfamily. Classic translation factor GTPase family. EF-Tu/EF-1A subfamily. In terms of assembly, monomer.

Its subcellular location is the cytoplasm. It catalyses the reaction GTP + H2O = GDP + phosphate + H(+). Its function is as follows. GTP hydrolase that promotes the GTP-dependent binding of aminoacyl-tRNA to the A-site of ribosomes during protein biosynthesis. This is Elongation factor Tu from Desulforapulum autotrophicum (strain ATCC 43914 / DSM 3382 / VKM B-1955 / HRM2) (Desulfobacterium autotrophicum).